The following is a 401-amino-acid chain: Argininosuccinate synthase (401 aa).

Residues alanine 11 to serine 19 and alanine 38 each bind ATP. Positions 89 and 94 each coordinate L-citrulline. Glycine 119 is a binding site for ATP. Residues threonine 121, asparagine 125, and aspartate 126 each contribute to the L-aspartate site. Asparagine 125 is an L-citrulline binding site. Residues arginine 129, serine 180, serine 189, glutamate 265, and tyrosine 277 each coordinate L-citrulline.

It belongs to the argininosuccinate synthase family. Type 1 subfamily. Homotetramer.

The protein resides in the cytoplasm. The catalysed reaction is L-citrulline + L-aspartate + ATP = 2-(N(omega)-L-arginino)succinate + AMP + diphosphate + H(+). The protein operates within amino-acid biosynthesis; L-arginine biosynthesis; L-arginine from L-ornithine and carbamoyl phosphate: step 2/3. The protein is Argininosuccinate synthase of Syntrophus aciditrophicus (strain SB).